The primary structure comprises 87 residues: Exendin-3 (87 aa).

A signal peptide spans 1 to 21 (MKIILWLCVFGLFLATLFPVS). Positions 22–45 (WQMPVESGLSSEDSASSESFASKI) are excised as a propeptide. S86 carries the post-translational modification Serine amide.

The protein belongs to the glucagon family. As to expression, expressed by the venom gland.

It localises to the secreted. In terms of biological role, stimulates vasoactive intestinal peptide (VIP) receptors in high concentrations (&gt;100 nM), resulting in both an increase in cAMP and amylase secretion from pancreatic acini, although at low concentrations (between 0.3 and 3 nM) it increases cAMP without stimulating amylase release. Stimulates the GLP-1 receptor (GLP1R). Induces hypotension that is mediated by relaxation of cardiac smooth muscle. This Heloderma horridum horridum (Mexican beaded lizard) protein is Exendin-3.